The primary structure comprises 419 residues: UDP-N-acetylglucosamine 1-carboxyvinyltransferase 2 (419 aa).

22–23 (KN) contributes to the phosphoenolpyruvate binding site. Arginine 92 is a UDP-N-acetyl-alpha-D-glucosamine binding site. Cysteine 116 serves as the catalytic Proton donor. Cysteine 116 bears the 2-(S-cysteinyl)pyruvic acid O-phosphothioketal mark. Residues 121 to 125 (RPIDL), aspartate 306, and valine 328 each bind UDP-N-acetyl-alpha-D-glucosamine.

Belongs to the EPSP synthase family. MurA subfamily.

Its subcellular location is the cytoplasm. The enzyme catalyses phosphoenolpyruvate + UDP-N-acetyl-alpha-D-glucosamine = UDP-N-acetyl-3-O-(1-carboxyvinyl)-alpha-D-glucosamine + phosphate. It participates in cell wall biogenesis; peptidoglycan biosynthesis. Its function is as follows. Cell wall formation. Adds enolpyruvyl to UDP-N-acetylglucosamine. This is UDP-N-acetylglucosamine 1-carboxyvinyltransferase 2 from Carboxydothermus hydrogenoformans (strain ATCC BAA-161 / DSM 6008 / Z-2901).